A 257-amino-acid chain; its full sequence is Triosephosphate isomerase, cytosolic (257 aa).

Substrate-binding residues include N10 and K12. H96 (electrophile) is an active-site residue. E167 functions as the Proton acceptor in the catalytic mechanism.

Belongs to the triosephosphate isomerase family. As to quaternary structure, homodimer. As to expression, higher levels found in leaves than in roots.

The protein resides in the cytoplasm. The catalysed reaction is D-glyceraldehyde 3-phosphate = dihydroxyacetone phosphate. It participates in carbohydrate biosynthesis; gluconeogenesis. The protein operates within carbohydrate degradation; glycolysis; D-glyceraldehyde 3-phosphate from glycerone phosphate: step 1/1. This is Triosephosphate isomerase, cytosolic (TPI) from Stellaria longipes (Longstalk starwort).